The primary structure comprises 34 residues: Peptide 9797 (34 aa).

In terms of tissue distribution, expressed by the venom gland.

It localises to the secreted. This Tityus stigmurus (Brazilian scorpion) protein is Peptide 9797.